The sequence spans 431 residues: 23S rRNA (uracil(1939)-C(5))-methyltransferase RlmD (431 aa).

In terms of domain architecture, TRAM spans 10–68; that stretch reads RVTTRQIITVKVNDLDSFGQGVARHNGKALFIPGLLPEESAEVIITEDKKQFARARVSR. Residues Cys81, Cys87, Cys90, and Cys161 each contribute to the [4Fe-4S] cluster site. S-adenosyl-L-methionine-binding residues include Gln264, Phe293, Asn298, Glu314, Asn341, and Asp362. The Nucleophile role is filled by Cys388.

Belongs to the class I-like SAM-binding methyltransferase superfamily. RNA M5U methyltransferase family. RlmD subfamily.

The catalysed reaction is uridine(1939) in 23S rRNA + S-adenosyl-L-methionine = 5-methyluridine(1939) in 23S rRNA + S-adenosyl-L-homocysteine + H(+). Catalyzes the formation of 5-methyl-uridine at position 1939 (m5U1939) in 23S rRNA. This Salmonella typhimurium (strain LT2 / SGSC1412 / ATCC 700720) protein is 23S rRNA (uracil(1939)-C(5))-methyltransferase RlmD.